The primary structure comprises 353 residues: Photosystem II protein D1 (353 aa).

The residue at position 2 (threonine 2) is an N-acetylthreonine. Threonine 2 is subject to Phosphothreonine. 3 helical membrane passes run 29–46 (YIGW…TATS), 118–133 (HFLL…EWEL), and 142–156 (WIAV…AATA). Residue histidine 118 participates in chlorophyll a binding. Tyrosine 126 lines the pheophytin a pocket. [CaMn4O5] cluster contacts are provided by aspartate 170 and glutamate 189. A helical membrane pass occupies residues 197–218 (FHMLGVAGVFGGSLFSAMHGSL). A chlorophyll a-binding site is contributed by histidine 198. A quinone is bound by residues histidine 215 and 264–265 (SF). Histidine 215 provides a ligand contact to Fe cation. Histidine 272 lines the Fe cation pocket. Residues 274–288 (FLAAWPVVGIWFTAL) form a helical membrane-spanning segment. [CaMn4O5] cluster is bound by residues histidine 332, glutamate 333, aspartate 342, and alanine 344. Residues 345 to 353 (AVEAPSTNG) constitute a propeptide that is removed on maturation.

Belongs to the reaction center PufL/M/PsbA/D family. As to quaternary structure, PSII is composed of 1 copy each of membrane proteins PsbA, PsbB, PsbC, PsbD, PsbE, PsbF, PsbH, PsbI, PsbJ, PsbK, PsbL, PsbM, PsbT, PsbX, PsbY, PsbZ, Psb30/Ycf12, at least 3 peripheral proteins of the oxygen-evolving complex and a large number of cofactors. It forms dimeric complexes. It depends on The D1/D2 heterodimer binds P680, chlorophylls that are the primary electron donor of PSII, and subsequent electron acceptors. It shares a non-heme iron and each subunit binds pheophytin, quinone, additional chlorophylls, carotenoids and lipids. D1 provides most of the ligands for the Mn4-Ca-O5 cluster of the oxygen-evolving complex (OEC). There is also a Cl(-1) ion associated with D1 and D2, which is required for oxygen evolution. The PSII complex binds additional chlorophylls, carotenoids and specific lipids. as a cofactor. Post-translationally, tyr-161 forms a radical intermediate that is referred to as redox-active TyrZ, YZ or Y-Z. C-terminally processed by CTPA; processing is essential to allow assembly of the oxygen-evolving complex and thus photosynthetic growth.

It localises to the plastid. It is found in the chloroplast thylakoid membrane. It carries out the reaction 2 a plastoquinone + 4 hnu + 2 H2O = 2 a plastoquinol + O2. Photosystem II (PSII) is a light-driven water:plastoquinone oxidoreductase that uses light energy to abstract electrons from H(2)O, generating O(2) and a proton gradient subsequently used for ATP formation. It consists of a core antenna complex that captures photons, and an electron transfer chain that converts photonic excitation into a charge separation. The D1/D2 (PsbA/PsbD) reaction center heterodimer binds P680, the primary electron donor of PSII as well as several subsequent electron acceptors. In Drimys granadensis, this protein is Photosystem II protein D1.